The following is a 239-amino-acid chain: Pyridoxine 5'-phosphate synthase (239 aa).

Asn7 contacts 3-amino-2-oxopropyl phosphate. A 1-deoxy-D-xylulose 5-phosphate-binding site is contributed by 9–10 (DH). Arg18 lines the 3-amino-2-oxopropyl phosphate pocket. The active-site Proton acceptor is the His43. 1-deoxy-D-xylulose 5-phosphate-binding residues include Arg45 and His50. Glu70 acts as the Proton acceptor in catalysis. 1-deoxy-D-xylulose 5-phosphate is bound at residue Thr100. His191 acts as the Proton donor in catalysis. Residues Gly192 and 213–214 (GH) contribute to the 3-amino-2-oxopropyl phosphate site.

It belongs to the PNP synthase family. In terms of assembly, homooctamer; tetramer of dimers.

It localises to the cytoplasm. It catalyses the reaction 3-amino-2-oxopropyl phosphate + 1-deoxy-D-xylulose 5-phosphate = pyridoxine 5'-phosphate + phosphate + 2 H2O + H(+). The protein operates within cofactor biosynthesis; pyridoxine 5'-phosphate biosynthesis; pyridoxine 5'-phosphate from D-erythrose 4-phosphate: step 5/5. Functionally, catalyzes the complicated ring closure reaction between the two acyclic compounds 1-deoxy-D-xylulose-5-phosphate (DXP) and 3-amino-2-oxopropyl phosphate (1-amino-acetone-3-phosphate or AAP) to form pyridoxine 5'-phosphate (PNP) and inorganic phosphate. The polypeptide is Pyridoxine 5'-phosphate synthase (Nostoc sp. (strain PCC 7120 / SAG 25.82 / UTEX 2576)).